We begin with the raw amino-acid sequence, 736 residues long: 1,4-alpha-glucan branching enzyme GlgB 2 (736 aa).

Catalysis depends on D415, which acts as the Nucleophile. Catalysis depends on E468, which acts as the Proton donor.

This sequence belongs to the glycosyl hydrolase 13 family. GlgB subfamily. In terms of assembly, monomer.

The catalysed reaction is Transfers a segment of a (1-&gt;4)-alpha-D-glucan chain to a primary hydroxy group in a similar glucan chain.. It participates in glycan biosynthesis; glycogen biosynthesis. Functionally, catalyzes the formation of the alpha-1,6-glucosidic linkages in glycogen by scission of a 1,4-alpha-linked oligosaccharide from growing alpha-1,4-glucan chains and the subsequent attachment of the oligosaccharide to the alpha-1,6 position. The chain is 1,4-alpha-glucan branching enzyme GlgB 2 from Rhizobium johnstonii (strain DSM 114642 / LMG 32736 / 3841) (Rhizobium leguminosarum bv. viciae).